The sequence spans 189 residues: Peptidyl-tRNA hydrolase (189 aa).

Y14 serves as a coordination point for tRNA. The active-site Proton acceptor is H19. 3 residues coordinate tRNA: F64, N66, and N112.

This sequence belongs to the PTH family. In terms of assembly, monomer.

It localises to the cytoplasm. The enzyme catalyses an N-acyl-L-alpha-aminoacyl-tRNA + H2O = an N-acyl-L-amino acid + a tRNA + H(+). Hydrolyzes ribosome-free peptidyl-tRNAs (with 1 or more amino acids incorporated), which drop off the ribosome during protein synthesis, or as a result of ribosome stalling. Its function is as follows. Catalyzes the release of premature peptidyl moieties from peptidyl-tRNA molecules trapped in stalled 50S ribosomal subunits, and thus maintains levels of free tRNAs and 50S ribosomes. The chain is Peptidyl-tRNA hydrolase from Erythrobacter litoralis (strain HTCC2594).